Reading from the N-terminus, the 1000-residue chain is C2 domain-containing protein 5 (1000 aa).

The C2 domain maps to 1–109 (MPGKLKVKIV…EAATVISGWF (109 aa)). Ca(2+)-binding residues include Asp-19, Asp-26, Asp-76, Asp-78, Ser-81, and Asp-84. Phosphoserine; by PKB/AKT2 is present on Ser-197. Residues Ser-200 and Ser-260 each carry the phosphoserine modification. The segment at 265–330 (MKEIPFNEDP…SGSAGKEGGP (66 aa)) is disordered. Over residues 274-289 (PNPNTHSSGPSTPLKN) the composition is skewed to polar residues. A compositionally biased stretch (low complexity) spans 290–318 (QTYSFSPSKSYSRQSSSSDTDLSLTPKTG). 5 positions are modified to phosphoserine: Ser-293, Ser-295, Ser-304, Ser-305, and Ser-306. Position 317 is a phosphothreonine (Thr-317). Gly residues predominate over residues 319-328 (MGSGSAGKEG). Position 323 is a phosphoserine (Ser-323). Thr-601 carries the phosphothreonine modification. Residues 639–669 (EIIGSPIPEPRQRSRLLRSQSESSDEVTELD) are disordered. Ser-643, Ser-657, Ser-659, Ser-661, and Ser-662 each carry phosphoserine. The residue at position 666 (Thr-666) is a Phosphothreonine. Ser-671 bears the Phosphoserine mark. Thr-807 carries the phosphothreonine modification. Phosphoserine occurs at positions 817 and 852.

Ca(2+) serves as cofactor. In terms of processing, phosphorylated on Ser-197 by active myristoylated kinase AKT2; insulin-stimulated phosphorylation by AKT2 regulates SLC2A4/GLUT4 translocation into the plasma membrane.

The protein localises to the cytoplasmic vesicle membrane. It is found in the cytoplasm. It localises to the cell cortex. The protein resides in the cell membrane. Its subcellular location is the cell projection. The protein localises to the ruffle. In terms of biological role, required for insulin-stimulated glucose transport and glucose transporter SLC2A4/GLUT4 translocation from intracellular glucose storage vesicle (GSV) to the plasma membrane (PM) in adipocytes. Binds phospholipid membranes in a calcium-dependent manner and is necessary for the optimal membrane fusion between SLC2A4/GLUT4 GSV and the PM. The protein is C2 domain-containing protein 5 (C2CD5) of Pongo abelii (Sumatran orangutan).